Here is a 31-residue protein sequence, read N- to C-terminus: Conotoxin pc6d (31 aa).

3 cysteine pairs are disulfide-bonded: C2-C20, C9-C25, and C19-C29.

It belongs to the conotoxin O1 superfamily. In terms of tissue distribution, expressed by the venom duct.

The protein localises to the secreted. The sequence is that of Conotoxin pc6d from Conus pictus (Cone snail).